A 409-amino-acid chain; its full sequence is Pyrophosphate--fructose 6-phosphate 1-phosphotransferase (409 aa).

Gly14 is a diphosphate binding site. Asp123 provides a ligand contact to Mg(2+). Substrate-binding positions include 151–153 (TID), 196–198 (MGR), Glu268, and 325–328 (YFAR). The active-site Proton acceptor is the Asp153.

Belongs to the phosphofructokinase type A (PFKA) family. PPi-dependent PFK group II subfamily. Clade 'P' sub-subfamily. Homotetramer. Mg(2+) serves as cofactor.

The protein resides in the cytoplasm. It catalyses the reaction beta-D-fructose 6-phosphate + diphosphate = beta-D-fructose 1,6-bisphosphate + phosphate + H(+). It functions in the pathway carbohydrate degradation; glycolysis; D-glyceraldehyde 3-phosphate and glycerone phosphate from D-glucose: step 3/4. With respect to regulation, non-allosteric. Its function is as follows. Catalyzes the phosphorylation of D-fructose 6-phosphate, the first committing step of glycolysis. Uses inorganic phosphate (PPi) as phosphoryl donor instead of ATP like common ATP-dependent phosphofructokinases (ATP-PFKs), which renders the reaction reversible, and can thus function both in glycolysis and gluconeogenesis. Consistently, PPi-PFK can replace the enzymes of both the forward (ATP-PFK) and reverse (fructose-bisphosphatase (FBPase)) reactions. The sequence is that of Pyrophosphate--fructose 6-phosphate 1-phosphotransferase from Methylotuvimicrobium alcaliphilum (strain DSM 19304 / NCIMB 14124 / VKM B-2133 / 20Z) (Methylomicrobium alcaliphilum).